The sequence spans 477 residues: Proline--tRNA ligase (477 aa).

This sequence belongs to the class-II aminoacyl-tRNA synthetase family. ProS type 3 subfamily. As to quaternary structure, homodimer.

Its subcellular location is the cytoplasm. The enzyme catalyses tRNA(Pro) + L-proline + ATP = L-prolyl-tRNA(Pro) + AMP + diphosphate. Its function is as follows. Catalyzes the attachment of proline to tRNA(Pro) in a two-step reaction: proline is first activated by ATP to form Pro-AMP and then transferred to the acceptor end of tRNA(Pro). This is Proline--tRNA ligase from Methanocorpusculum labreanum (strain ATCC 43576 / DSM 4855 / Z).